The following is a 213-amino-acid chain: Large ribosomal subunit protein uL3 (213 aa).

Residues 131–168 (GPMSHGSKNHRLPGSTGAGTTPGRVYPGKRMAGRSGND) form a disordered region.

The protein belongs to the universal ribosomal protein uL3 family. Part of the 50S ribosomal subunit. Forms a cluster with proteins L14 and L19.

One of the primary rRNA binding proteins, it binds directly near the 3'-end of the 23S rRNA, where it nucleates assembly of the 50S subunit. The chain is Large ribosomal subunit protein uL3 from Synechococcus elongatus (strain ATCC 33912 / PCC 7942 / FACHB-805) (Anacystis nidulans R2).